A 221-amino-acid polypeptide reads, in one-letter code: MKLRAVVLGLATLCTSTATFAGMVSTSSNLEFLAIDGQKASKSLGKAKTFTVDDTQNHQVVVRLNEIVGSGSNQSLFESNPVIVTFQGNAEDLVISAPVIRNLDSGDKFNQMPNITVKTKSGNAISAKVDVLKQEGLFPSGNVLNDLAEYNASGAAASVSKFAATTVASSVAVAPAGNAKANKGKVVVQGENVAEQQLQYWFQQADKETQTRFLNWAKSHK.

Residues 1–21 (MKLRAVVLGLATLCTSTATFA) form the signal peptide.

Belongs to the UPF0319 family.

This chain is UPF0319 protein CGSHiEE_03630, found in Haemophilus influenzae (strain PittEE).